The primary structure comprises 717 residues: Ubinuclein-2 (717 aa).

Disordered regions lie at residues 114–136 (KDGSDGEELDGAPDDDDYDTEDS), 166–308 (LERI…SAKS), and 620–717 (ADSS…NLPS). Over residues 118 to 136 (DGEELDGAPDDDDYDTEDS) the composition is skewed to acidic residues. Composition is skewed to polar residues over residues 214–246 (QSASPGPSSKKISNDSKTVQDSFSPLKAQNGND) and 285–308 (SSKSVHEQSNSPPGKSRPNVSAKS). The segment covering 623–632 (SFERSKQQHE) has biased composition (basic and acidic residues). Positions 634–641 (LKRTSSLS) match the Nuclear localization signal motif. Positions 653–665 (KTEPALEETHLPA) are enriched in basic and acidic residues. The segment covering 675 to 705 (RQTHLKSKTHKQVQVHPQSKAHKQAQVHPKA) has biased composition (basic residues). Residues 706–717 (KTQTPPDLNLPS) are compositionally biased toward polar residues.

The protein belongs to the ubinuclein family. Component of the HIRA complex made of UBN1, UBN2, ASF1A, CABIN1 and HIRA. Interacts with HIRA.

The protein localises to the nucleus. The protein resides in the nucleolus. Its function is as follows. May be required for replication-independent chromatin assembly. The polypeptide is Ubinuclein-2 (Arabidopsis thaliana (Mouse-ear cress)).